A 32-amino-acid polypeptide reads, in one-letter code: Potassium channel toxin alpha-KTx 9.4 (32 aa).

Disulfide bonds link Cys-3/Cys-19, Cys-6/Cys-24, and Cys-10/Cys-26.

As to expression, expressed by the venom gland.

The protein resides in the secreted. Blocker of human voltage-gated potassium channel Kv1.1/KCNA1. The sequence is that of Potassium channel toxin alpha-KTx 9.4 from Hottentotta tamulus (Eastern Indian scorpion).